The following is a 269-amino-acid chain: LOB domain-containing protein 6 (269 aa).

An LOB domain is found at Ser-37–Leu-138.

This sequence belongs to the LOB domain-containing protein family.

It is found in the nucleus. In terms of biological role, negative regulator of cell proliferation in the adaxial side of leaves. Regulates the formation of a symmetric lamina and the establishment of venation. The sequence is that of LOB domain-containing protein 6 (LBD6) from Oryza sativa subsp. indica (Rice).